The sequence spans 404 residues: CD209 antigen (404 aa).

Over 1 to 37 (MSDSKEPRLQQLGLLEEEQLRGLGFRQTRGYKSLAGC) the chain is Cytoplasmic. Short sequence motifs (endocytosis signal) lie at residues 14-15 (LL), 16-18 (EEE), and 31-34 (YKSL). Residues 38 to 58 (LGHGPLVLQLLSFTLLAGLLV) form a helical; Signal-anchor for type II membrane protein membrane-spanning segment. Residues 59 to 404 (QVSKVPSSIS…APATPNPPPA (346 aa)) lie on the Extracellular side of the membrane. An N-linked (GlcNAc...) asparagine glycan is attached at Asn80. 7 repeat units span residues 96-118 (KLQE…PEKS), 119-141 (KLQE…PEKS), 142-164 (KLQE…PEKS), 165-187 (KMQE…PEKS), 188-210 (KQQE…PEKS), 211-233 (KQQE…PEKS), and 234-257 (KQQE…HPCP). The tract at residues 96 to 257 (KLQEIYQELT…AVERLCHPCP (162 aa)) is 7 X approximate tandem repeats. 3 cysteine pairs are disulfide-bonded: Cys256/Cys267, Cys284/Cys377, and Cys356/Cys369. The C-type lectin domain occupies 263-378 (FQGNCYFMSN…CNLAKFWICK (116 aa)). Glu347, Asn349, Val351, Glu354, Asn365, and Asp366 together coordinate Ca(2+).

As to quaternary structure, homotetramer. Interacts with C1QBP; the interaction is indicative for a C1q:C1QBP:CD209 signaling complex. Interacts with ICAM2 and ICAM3 by binding to mannose-like carbohydrates. Interacts (via C-type lectin domain) with CEACAM1 (via Lewis X moieties); this interaction is regulated by the glycosylation pattern of CEACAM1 on cell types and regulates contact between dendritic cells and neutrophils. (Microbial infection) Interacts with HIV-1 and HIV-2 gp120. In terms of assembly, (Microbial infection) Interacts with ebolavirus envelope glycoproteins. As to quaternary structure, (Microbial infection) Interacts with cytomegalovirus gB protein. (Microbial infection) Interacts with HCV E2 protein. In terms of assembly, (Microbial infection) Interacts with dengue virus major envelope protein E. As to quaternary structure, (Microbial infection) Interacts with measles hemagglutinin. (Microbial infection) Interacts with herpes simplex virus 1 surface proteins. In terms of assembly, (Microbial infection) Interacts with Influenzavirus A hemagglutinin. As to quaternary structure, (Microbial infection) Interacts with SARS-CoV spike glycoprotein. (Microbial infection) Interacts with Japanese encephalitis virus E protein. In terms of assembly, (Microbial infection) Interacts with Lassa virus Glycoprotein. As to quaternary structure, (Microbial infection) Interacts with marburg virus glycoprotein. (Microbial infection) Interacts with Respiratory syncytial virus glycoprotein G. In terms of assembly, (Microbial infection) Interacts with Rift valley fever virus and uukuniemi virus envelope glycoprotein. As to quaternary structure, (Microbial infection) Interacts with west-nile virus envelope glycoprotein. (Microbial infection) Interacts with whole M.bovis cells in a Ca(2+)-dependent and independent manner; in vitro experiments suggest it interacts with CH60.1 (groL1), DnaK, GADPH (gap) and LrpG. As to expression, predominantly expressed in dendritic cells and in DC-residing tissues. Also found in placental macrophages, endothelial cells of placental vascular channels, peripheral blood mononuclear cells, and THP-1 monocytes.

The protein localises to the cell membrane. It is found in the secreted. Functionally, pathogen-recognition receptor expressed on the surface of immature dendritic cells (DCs) and involved in initiation of primary immune response. Thought to mediate the endocytosis of pathogens which are subsequently degraded in lysosomal compartments. The receptor returns to the cell membrane surface and the pathogen-derived antigens are presented to resting T-cells via MHC class II proteins to initiate the adaptive immune response. In terms of biological role, on DCs it is a high affinity receptor for ICAM2 and ICAM3 by binding to mannose-like carbohydrates. May act as a DC rolling receptor that mediates transendothelial migration of DC presursors from blood to tissues by binding endothelial ICAM2. Seems to regulate DC-induced T-cell proliferation by binding to ICAM3 on T-cells in the immunological synapse formed between DC and T-cells. (Microbial infection) Acts as an attachment receptor for HIV-1 and HIV-2. Its function is as follows. (Microbial infection) Acts as an attachment receptor for Ebolavirus. Functionally, (Microbial infection) Acts as an attachment receptor for Cytomegalovirus. In terms of biological role, (Microbial infection) Acts as an attachment receptor for HCV. (Microbial infection) Acts as an attachment receptor for Dengue virus. Its function is as follows. (Microbial infection) Acts as an attachment receptor for Measles virus. Functionally, (Microbial infection) Acts as an attachment receptor for Herpes simplex virus 1. In terms of biological role, (Microbial infection) Acts as an attachment receptor for Influenzavirus A. (Microbial infection) Acts as an attachment receptor for SARS-CoV. Its function is as follows. (Microbial infection) Acts as an attachment receptor for Japanese encephalitis virus. Functionally, (Microbial infection) Acts as an attachment receptor for Lassa virus. Acts as an attachment receptor for Marburg virusn. In terms of biological role, (Microbial infection) Acts as an attachment receptor for Respiratory syncytial virus. (Microbial infection) Acts as an attachment receptor for Rift valley fever virus and uukuniemi virus. Its function is as follows. (Microbial infection) Acts as an attachment receptor for West-nile virus. Functionally, (Microbial infection) Probably recognizes in a calcium-dependent manner high mannose N-linked oligosaccharides in a variety of bacterial pathogen antigens, including Leishmania pifanoi LPG, Lewis-x antigen in Helicobacter pylori LPS, mannose in Klebsiella pneumonae LPS, di-mannose and tri-mannose in Mycobacterium tuberculosis ManLAM and Lewis-x antigen in Schistosoma mansoni SEA. Recognition of M.tuberculosis by dendritic cells occurs partially via this molecule. The protein is CD209 antigen (CD209) of Homo sapiens (Human).